We begin with the raw amino-acid sequence, 468 residues long: Probable 1,4-beta-D-glucan cellobiohydrolase C (468 aa).

A signal peptide spans 1–18; that stretch reads MGRVSSLALALLLPAVQA. The region spanning 19–54 is the CBM1 domain; that stretch reads QQTLWGQCGGIGWTGPTNCVAGAACSTQNPYYAQCL. Intrachain disulfides connect cysteine 26–cysteine 43 and cysteine 37–cysteine 53. The tract at residues 57–106 is thr-rich linker; the sequence is TATTSTTLTTTTRVTTTTTSTTSKSSSTGSTTTTKSTGTTTTSGSSTTIT. The interval 68-107 is disordered; sequence TRVTTTTTSTTSKSSSTGSTTTTKSTGTTTTSGSSTTITS. The catalytic stretch occupies residues 107–468; the sequence is SAPSGNPFSG…QLLKNANPAF (362 aa). Residue aspartate 198 is part of the active site. Intrachain disulfides connect cysteine 199–cysteine 258 and cysteine 390–cysteine 437. Aspartate 244 acts as the Proton donor in catalysis. Catalysis depends on aspartate 423, which acts as the Nucleophile.

The protein belongs to the glycosyl hydrolase 6 (cellulase B) family.

The protein localises to the secreted. It carries out the reaction Hydrolysis of (1-&gt;4)-beta-D-glucosidic linkages in cellulose and cellotetraose, releasing cellobiose from the non-reducing ends of the chains.. Its function is as follows. The biological conversion of cellulose to glucose generally requires three types of hydrolytic enzymes: (1) Endoglucanases which cut internal beta-1,4-glucosidic bonds; (2) Exocellobiohydrolases that cut the disaccharide cellobiose from the non-reducing end of the cellulose polymer chain; (3) Beta-1,4-glucosidases which hydrolyze the cellobiose and other short cello-oligosaccharides to glucose. The chain is Probable 1,4-beta-D-glucan cellobiohydrolase C (cbhC) from Aspergillus terreus (strain NIH 2624 / FGSC A1156).